A 344-amino-acid polypeptide reads, in one-letter code: N,N-dimethyltransferase OxyT (344 aa).

S-adenosyl-L-methionine contacts are provided by residues D205 and 231–233 (GDF).

Belongs to the class I-like SAM-binding methyltransferase superfamily. Cation-independent O-methyltransferase family.

It catalyses the reaction 4-amino-4-dedimethylamino-anhydrotetracycline + S-adenosyl-L-methionine = 4-methylamino-4-dedimethylamino-anhydrotetracycline + S-adenosyl-L-homocysteine + H(+). The enzyme catalyses 4-methylamino-4-dedimethylamino-anhydrotetracycline + S-adenosyl-L-methionine = anhydrotetracycline + S-adenosyl-L-homocysteine + H(+). The protein operates within antibiotic biosynthesis; oxytetracycline biosynthesis. Its function is as follows. Involved in the biosynthesis of the tetracycline antibiotic, oxytetracycline. Catalyzes the dimethylation of 4-amino-4-de(dimethylamino)anhydrotetracycline (4-amino-ATC) to yield anhydrotetracycline (ATC). Also able to catalyze the dimethylation of 7-chloro-, 6-demethyl-, 2-decarboxamido-2-nitrile-, and 4-methylamino-derivatives of 4-amino-4-de(dimethylamino)anhydrotetracycline. The chain is N,N-dimethyltransferase OxyT from Streptomyces rimosus.